The primary structure comprises 34 residues: Photosystem II reaction center protein Psb30 (34 aa).

Residues Q9–L29 form a helical membrane-spanning segment.

Belongs to the Psb30/Ycf12 family. PSII is composed of 1 copy each of membrane proteins PsbA, PsbB, PsbC, PsbD, PsbE, PsbF, PsbH, PsbI, PsbJ, PsbK, PsbL, PsbM, PsbT, PsbX, PsbY, PsbZ, Psb30/Ycf12, peripheral proteins of the oxygen-evolving complex and a large number of cofactors. It forms dimeric complexes.

Its subcellular location is the plastid. It localises to the chloroplast thylakoid membrane. A core subunit of photosystem II (PSII), probably helps stabilize the reaction center. The chain is Photosystem II reaction center protein Psb30 from Phaeodactylum tricornutum (strain CCAP 1055/1).